The primary structure comprises 239 residues: Ribose-5-phosphate isomerase A (239 aa).

Substrate is bound by residues 39–42, 95–98, and 108–111; these read SGST, DGAD, and KGGG. Glutamate 117 serves as the catalytic Proton acceptor. A substrate-binding site is contributed by lysine 135.

This sequence belongs to the ribose 5-phosphate isomerase family. As to quaternary structure, homodimer.

The enzyme catalyses aldehydo-D-ribose 5-phosphate = D-ribulose 5-phosphate. The protein operates within carbohydrate degradation; pentose phosphate pathway; D-ribose 5-phosphate from D-ribulose 5-phosphate (non-oxidative stage): step 1/1. In terms of biological role, catalyzes the reversible conversion of ribose-5-phosphate to ribulose 5-phosphate. This chain is Ribose-5-phosphate isomerase A, found in Chlamydia muridarum (strain MoPn / Nigg).